A 295-amino-acid polypeptide reads, in one-letter code: Nitrogenase iron protein 1 (295 aa).

Position 13–20 (13–20 (GKGGIGKS)) interacts with ATP. [4Fe-4S] cluster is bound at residue cysteine 101. An ADP-ribosylarginine; by dinitrogenase reductase ADP-ribosyltransferase modification is found at arginine 104. Cysteine 135 contacts [4Fe-4S] cluster.

It belongs to the NifH/BchL/ChlL family. As to quaternary structure, homodimer. The cofactor is [4Fe-4S] cluster. In terms of processing, the reversible ADP-ribosylation of Arg-104 inactivates the nitrogenase reductase and regulates nitrogenase activity.

It carries out the reaction N2 + 8 reduced [2Fe-2S]-[ferredoxin] + 16 ATP + 16 H2O = H2 + 8 oxidized [2Fe-2S]-[ferredoxin] + 2 NH4(+) + 16 ADP + 16 phosphate + 6 H(+). Its function is as follows. The key enzymatic reactions in nitrogen fixation are catalyzed by the nitrogenase complex, which has 2 components: the iron protein and the molybdenum-iron protein. The protein is Nitrogenase iron protein 1 (nifH1) of Nostoc sp. (strain PCC 7120 / SAG 25.82 / UTEX 2576).